The sequence spans 75 residues: Small ribosomal subunit protein bS18 (75 aa).

It belongs to the bacterial ribosomal protein bS18 family. Part of the 30S ribosomal subunit. Forms a tight heterodimer with protein bS6.

Its function is as follows. Binds as a heterodimer with protein bS6 to the central domain of the 16S rRNA, where it helps stabilize the platform of the 30S subunit. The protein is Small ribosomal subunit protein bS18 of Cellvibrio japonicus (strain Ueda107) (Pseudomonas fluorescens subsp. cellulosa).